Consider the following 457-residue polypeptide: Bifunctional protein GlmU (457 aa).

The tract at residues 1-230 is pyrophosphorylase; that stretch reads MSKRYAVVLA…FEESLGVNDR (230 aa). UDP-N-acetyl-alpha-D-glucosamine-binding positions include 9-12, Lys-23, Gln-73, and 78-79; these read LAAG and GT. Asp-103 is a binding site for Mg(2+). Residues Gly-140, Glu-155, Asn-170, and Asn-228 each coordinate UDP-N-acetyl-alpha-D-glucosamine. Asn-228 lines the Mg(2+) pocket. Positions 231 to 251 are linker; it reads IALAEASKLMQRRINENHMRN. Positions 252–457 are N-acetyltransferase; sequence GVTLVNPEST…GYAKHLNHSK (206 aa). Residues Arg-333 and Lys-351 each coordinate UDP-N-acetyl-alpha-D-glucosamine. The active-site Proton acceptor is the His-363. UDP-N-acetyl-alpha-D-glucosamine-binding residues include Tyr-366 and Asn-377. Acetyl-CoA contacts are provided by residues 386–387, Ala-423, and Arg-440; that span reads NY.

This sequence in the N-terminal section; belongs to the N-acetylglucosamine-1-phosphate uridyltransferase family. It in the C-terminal section; belongs to the transferase hexapeptide repeat family. Homotrimer. The cofactor is Mg(2+).

Its subcellular location is the cytoplasm. It carries out the reaction alpha-D-glucosamine 1-phosphate + acetyl-CoA = N-acetyl-alpha-D-glucosamine 1-phosphate + CoA + H(+). The catalysed reaction is N-acetyl-alpha-D-glucosamine 1-phosphate + UTP + H(+) = UDP-N-acetyl-alpha-D-glucosamine + diphosphate. It participates in nucleotide-sugar biosynthesis; UDP-N-acetyl-alpha-D-glucosamine biosynthesis; N-acetyl-alpha-D-glucosamine 1-phosphate from alpha-D-glucosamine 6-phosphate (route II): step 2/2. It functions in the pathway nucleotide-sugar biosynthesis; UDP-N-acetyl-alpha-D-glucosamine biosynthesis; UDP-N-acetyl-alpha-D-glucosamine from N-acetyl-alpha-D-glucosamine 1-phosphate: step 1/1. Its pathway is bacterial outer membrane biogenesis; LPS lipid A biosynthesis. Catalyzes the last two sequential reactions in the de novo biosynthetic pathway for UDP-N-acetylglucosamine (UDP-GlcNAc). The C-terminal domain catalyzes the transfer of acetyl group from acetyl coenzyme A to glucosamine-1-phosphate (GlcN-1-P) to produce N-acetylglucosamine-1-phosphate (GlcNAc-1-P), which is converted into UDP-GlcNAc by the transfer of uridine 5-monophosphate (from uridine 5-triphosphate), a reaction catalyzed by the N-terminal domain. This Listeria monocytogenes serovar 1/2a (strain ATCC BAA-679 / EGD-e) protein is Bifunctional protein GlmU.